The sequence spans 177 residues: Acetyltransferase (177 aa).

The N-acetyltransferase domain occupies 4–174; the sequence is AQLRRVTAES…PTAIYFKTLG (171 aa). Acetyl-CoA contacts are provided by residues Glu-27, 96–98, 104–109, 130–131, and Tyr-141; these read LMV, GRGLGR, and DT.

Its function is as follows. Renders tabtoxin-producing pathogens tolerant to their own phytotoxins. The polypeptide is Acetyltransferase (ttr) (Pseudomonas amygdali pv. tabaci (Pseudomonas syringae pv. tabaci)).